A 472-amino-acid polypeptide reads, in one-letter code: ESX-3 secretion system protein EccD3 (472 aa).

The next 11 helical transmembrane spans lie at Trp121–Ala141, Leu155–Ile175, Gly183–Pro203, Val211–Ala231, Val236–Ala256, Leu258–Val278, Gln327–Val347, Pro349–Leu369, Ala381–Thr401, Val405–Ala425, and Gly450–Leu470.

This sequence belongs to the EccD/Snm4 family. Part of the ESX-3 / type VII secretion system (T7SS), which is composed of cytosolic and membrane components. The ESX-3 membrane complex is composed of EccB3, EccC3, EccD3 and EccE3.

It localises to the cell inner membrane. Part of the ESX-3 specialized secretion system, which is important for iron and zinc uptake or homeostasis. The chain is ESX-3 secretion system protein EccD3 from Mycobacterium tuberculosis (strain CDC 1551 / Oshkosh).